We begin with the raw amino-acid sequence, 47 residues long: Defensin NsD7 (47 aa).

4 disulfides stabilise this stretch: Cys3–Cys47, Cys14–Cys34, Cys20–Cys41, and Cys24–Cys43. A 1,2-diacyl-sn-glycero-3-phosphate-binding residues include Lys4, His33, Lys36, and Arg39.

The protein belongs to the DEFL family. As to quaternary structure, in the presence of phosphatidic acid (PA), forms right-handed double helices which tend to bundle into fibrils. Each helix is a repetition of dimers containing 2 bound molecules of PA per dimer. Dimers are arranged orthogonally in a tip-to-tip configuration with 1 molecule of PA located at the dimer contact interface. Association of 2 helices to form a double helix depends on intercalating isoleucine residues Ile-15 and Ile-37. Bundling of double helices into fibrils depends on Arg-26.

The protein resides in the vacuole. Its function is as follows. Plant defense peptide. Disrupts membranes containing phosphatidic acid (PA) via a PA-dependent oligomerization process. The polypeptide is Defensin NsD7 (Nicotiana suaveolens (Australian tobacco)).